Here is a 520-residue protein sequence, read N- to C-terminus: Hydroxymethylglutaryl-CoA synthase, cytoplasmic (520 aa).

Serine 4 bears the Phosphoserine mark. Alanine 44 is a binding site for (3S)-3-hydroxy-3-methylglutaryl-CoA. 44–46 contacts CoA; the sequence is AGK. Position 46 is an N6-acetyllysine (lysine 46). Glutamate 95 serves as the catalytic Proton donor/acceptor. (3S)-3-hydroxy-3-methylglutaryl-CoA is bound by residues cysteine 129, asparagine 167, threonine 171, serine 221, and histidine 264. Cysteine 129 (acyl-thioester intermediate) is an active-site residue. CoA is bound at residue asparagine 167. Serine 221 contacts CoA. Catalysis depends on histidine 264, which acts as the Proton donor/acceptor. The CoA site is built by lysine 269 and lysine 273. (3S)-3-hydroxy-3-methylglutaryl-CoA is bound by residues lysine 273, asparagine 343, and serine 377. Residue lysine 273 is modified to N6-acetyllysine. Threonine 476 is modified (phosphothreonine). The tract at residues 492–520 is disordered; that stretch reads HIPSPAKKVPRLPATAAEPEAAVISNGEH. Residues serine 495 and serine 516 each carry the phosphoserine modification.

Belongs to the thiolase-like superfamily. HMG-CoA synthase family. In terms of assembly, homodimer.

It is found in the cytoplasm. The enzyme catalyses acetoacetyl-CoA + acetyl-CoA + H2O = (3S)-3-hydroxy-3-methylglutaryl-CoA + CoA + H(+). It participates in metabolic intermediate biosynthesis; (R)-mevalonate biosynthesis; (R)-mevalonate from acetyl-CoA: step 2/3. Its function is as follows. Catalyzes the condensation of acetyl-CoA with acetoacetyl-CoA to form HMG-CoA, which is converted by HMG-CoA reductase (HMGCR) into mevalonate, a precursor for cholesterol synthesis. This chain is Hydroxymethylglutaryl-CoA synthase, cytoplasmic, found in Pongo abelii (Sumatran orangutan).